Consider the following 335-residue polypeptide: Pyridoxal 5'-phosphate synthase subunit PdxS (335 aa).

Aspartate 30 is a D-ribose 5-phosphate binding site. Catalysis depends on lysine 87, which acts as the Schiff-base intermediate with D-ribose 5-phosphate. Residue glycine 159 coordinates D-ribose 5-phosphate. Residue arginine 171 participates in D-glyceraldehyde 3-phosphate binding. Residues glycine 257 and 278–279 (GS) each bind D-ribose 5-phosphate.

It belongs to the PdxS/SNZ family. In terms of assembly, in the presence of PdxT, forms a dodecamer of heterodimers.

It catalyses the reaction aldehydo-D-ribose 5-phosphate + D-glyceraldehyde 3-phosphate + L-glutamine = pyridoxal 5'-phosphate + L-glutamate + phosphate + 3 H2O + H(+). The protein operates within cofactor biosynthesis; pyridoxal 5'-phosphate biosynthesis. Catalyzes the formation of pyridoxal 5'-phosphate from ribose 5-phosphate (RBP), glyceraldehyde 3-phosphate (G3P) and ammonia. The ammonia is provided by the PdxT subunit. Can also use ribulose 5-phosphate and dihydroxyacetone phosphate as substrates, resulting from enzyme-catalyzed isomerization of RBP and G3P, respectively. The protein is Pyridoxal 5'-phosphate synthase subunit PdxS of Pyrococcus furiosus (strain ATCC 43587 / DSM 3638 / JCM 8422 / Vc1).